We begin with the raw amino-acid sequence, 555 residues long: Dimethylaniline monooxygenase [N-oxide-forming] 4 (555 aa).

FAD is bound by residues 9 to 13, Glu-32, and 40 to 41; these read GAGVS and LW. Residues 60–61 and 195–198 contribute to the NADP(+) site; these read TN and SGGD. A helical membrane pass occupies residues 515 to 532; it reads YLKVWGAPLLLASVLLIC.

It belongs to the FMO family. The cofactor is FAD. In terms of tissue distribution, kidney and liver.

The protein resides in the microsome membrane. It localises to the endoplasmic reticulum membrane. It carries out the reaction N,N-dimethylaniline + NADPH + O2 + H(+) = N,N-dimethylaniline N-oxide + NADP(+) + H2O. This protein is involved in the oxidative metabolism of a variety of xenobiotics such as drugs and pesticides. The protein is Dimethylaniline monooxygenase [N-oxide-forming] 4 (FMO4) of Oryctolagus cuniculus (Rabbit).